The primary structure comprises 297 residues: Tyrosine recombinase XerD (297 aa).

A Core-binding (CB) domain is found at 1 to 86; sequence MKNLALIDLF…AMRKLFQYLY (86 aa). The Tyr recombinase domain maps to 107–291; the sequence is RLPKYLTEQQ…AKERLKRLHE (185 aa). Catalysis depends on residues R147, K171, H243, R246, and H269. Y278 functions as the O-(3'-phospho-DNA)-tyrosine intermediate in the catalytic mechanism.

Belongs to the 'phage' integrase family. XerD subfamily. Forms a cyclic heterotetrameric complex composed of two molecules of XerC and two molecules of XerD.

The protein localises to the cytoplasm. Its function is as follows. Site-specific tyrosine recombinase, which acts by catalyzing the cutting and rejoining of the recombining DNA molecules. The XerC-XerD complex is essential to convert dimers of the bacterial chromosome into monomers to permit their segregation at cell division. It also contributes to the segregational stability of plasmids. The protein is Tyrosine recombinase XerD of Haemophilus influenzae (strain ATCC 51907 / DSM 11121 / KW20 / Rd).